The primary structure comprises 357 residues: Peptide chain release factor 1 (357 aa).

At Q236 the chain carries N5-methylglutamine.

This sequence belongs to the prokaryotic/mitochondrial release factor family. In terms of processing, methylated by PrmC. Methylation increases the termination efficiency of RF1.

The protein resides in the cytoplasm. In terms of biological role, peptide chain release factor 1 directs the termination of translation in response to the peptide chain termination codons UAG and UAA. This chain is Peptide chain release factor 1, found in Mycolicibacterium vanbaalenii (strain DSM 7251 / JCM 13017 / BCRC 16820 / KCTC 9966 / NRRL B-24157 / PYR-1) (Mycobacterium vanbaalenii).